The sequence spans 503 residues: Aromatase (503 aa).

3 helical membrane passes run 19 to 39 (EVMP…LLVW), 51 to 71 (GYCM…MGIG), and 303 to 323 (MLIA…FLIA). 2 residues coordinate substrate: Asp-309 and Met-374. Cys-437 lines the heme pocket.

The protein belongs to the cytochrome P450 family. It depends on heme as a cofactor.

Its subcellular location is the endoplasmic reticulum membrane. The protein localises to the microsome membrane. The enzyme catalyses testosterone + 3 reduced [NADPH--hemoprotein reductase] + 3 O2 = 17beta-estradiol + formate + 3 oxidized [NADPH--hemoprotein reductase] + 4 H2O + 4 H(+). The catalysed reaction is androst-4-ene-3,17-dione + 3 reduced [NADPH--hemoprotein reductase] + 3 O2 = estrone + formate + 3 oxidized [NADPH--hemoprotein reductase] + 4 H2O + 4 H(+). It carries out the reaction androst-4-ene-3,17-dione + reduced [NADPH--hemoprotein reductase] + O2 = 19-hydroxyandrost-4-ene-3,17-dione + oxidized [NADPH--hemoprotein reductase] + H2O + H(+). It catalyses the reaction 19-hydroxyandrost-4-ene-3,17-dione + reduced [NADPH--hemoprotein reductase] + O2 = 19-oxo-androst-4-ene-3,17-dione + oxidized [NADPH--hemoprotein reductase] + 2 H2O + H(+). The enzyme catalyses 19-oxo-androst-4-ene-3,17-dione + reduced [NADPH--hemoprotein reductase] + O2 = estrone + formate + oxidized [NADPH--hemoprotein reductase] + H2O + 2 H(+). The catalysed reaction is estrone + reduced [NADPH--hemoprotein reductase] + O2 = 2-hydroxyestrone + oxidized [NADPH--hemoprotein reductase] + H2O + H(+). It carries out the reaction 17beta-hydroxy-5alpha-androstan-3-one + reduced [NADPH--hemoprotein reductase] + O2 = 17beta,19-dihydroxy-3-oxo-5alpha-androstanone + oxidized [NADPH--hemoprotein reductase] + H2O + H(+). It catalyses the reaction 17beta,19-dihydroxy-3-oxo-5alpha-androstanone + reduced [NADPH--hemoprotein reductase] + O2 = 17beta-hydroxy-3,19-dioxo-5alpha-androstanone + oxidized [NADPH--hemoprotein reductase] + 2 H2O + H(+). The enzyme catalyses 17beta-hydroxy-3,19-dioxo-5alpha-androstanone + reduced [NADPH--hemoprotein reductase] + O2 = 17beta-hydroxy-3-oxo-19-nor-5alpha-androst-1-ene + formate + oxidized [NADPH--hemoprotein reductase] + H2O + 2 H(+). It participates in steroid hormone biosynthesis. Its function is as follows. A cytochrome P450 monooxygenase that catalyzes the conversion of C19 androgens, androst-4-ene-3,17-dione (androstenedione) and testosterone to the C18 estrogens, estrone and estradiol, respectively. Catalyzes three successive oxidations of C19 androgens: two conventional oxidations at C19 yielding 19-hydroxy and 19-oxo/19-aldehyde derivatives, followed by a third oxidative aromatization step that involves C1-beta hydrogen abstraction combined with cleavage of the C10-C19 bond to yield a phenolic A ring and formic acid. Alternatively, the third oxidative reaction yields a 19-norsteroid and formic acid. Converts dihydrotestosterone to delta1,10-dehydro 19-nordihydrotestosterone and may play a role in homeostasis of this potent androgen. Also displays 2-hydroxylase activity toward estrone. Mechanistically, uses molecular oxygen inserting one oxygen atom into a substrate, and reducing the second into a water molecule, with two electrons provided by NADPH via cytochrome P450 reductase (CPR; NADPH-ferrihemoprotein reductase). The polypeptide is Aromatase (CYP19A1) (Canis lupus familiaris (Dog)).